We begin with the raw amino-acid sequence, 601 residues long: Phosphomethylpyrimidine synthase (601 aa).

Residues Asn-224, Met-253, Tyr-282, His-318, 338 to 340 (SRG), 379 to 382 (DGLR), and Glu-418 contribute to the substrate site. His-422 serves as a coordination point for Zn(2+). Position 445 (Tyr-445) interacts with substrate. His-486 is a binding site for Zn(2+). Positions 566, 569, and 574 each coordinate [4Fe-4S] cluster.

This sequence belongs to the ThiC family. Homodimer. [4Fe-4S] cluster is required as a cofactor.

The enzyme catalyses 5-amino-1-(5-phospho-beta-D-ribosyl)imidazole + S-adenosyl-L-methionine = 4-amino-2-methyl-5-(phosphooxymethyl)pyrimidine + CO + 5'-deoxyadenosine + formate + L-methionine + 3 H(+). Its pathway is cofactor biosynthesis; thiamine diphosphate biosynthesis. In terms of biological role, catalyzes the synthesis of the hydroxymethylpyrimidine phosphate (HMP-P) moiety of thiamine from aminoimidazole ribotide (AIR) in a radical S-adenosyl-L-methionine (SAM)-dependent reaction. This chain is Phosphomethylpyrimidine synthase, found in Xylella fastidiosa (strain 9a5c).